Reading from the N-terminus, the 146-residue chain is uncharacterized protein (146 aa).

This is an uncharacterized protein from Saccharomyces cerevisiae (strain ATCC 204508 / S288c) (Baker's yeast).